A 288-amino-acid chain; its full sequence is Urease accessory protein UreD 1 (288 aa).

The segment covering 1-10 (MHGPLAPAPS) has biased composition (pro residues). A disordered region spans residues 1-35 (MHGPLAPAPSPERLGAAPARQRSDGRIRLRVGPAR).

The protein belongs to the UreD family. As to quaternary structure, ureD, UreF and UreG form a complex that acts as a GTP-hydrolysis-dependent molecular chaperone, activating the urease apoprotein by helping to assemble the nickel containing metallocenter of UreC. The UreE protein probably delivers the nickel.

It is found in the cytoplasm. Required for maturation of urease via the functional incorporation of the urease nickel metallocenter. This is Urease accessory protein UreD 1 from Methylobacterium radiotolerans (strain ATCC 27329 / DSM 1819 / JCM 2831 / NBRC 15690 / NCIMB 10815 / 0-1).